The following is a 188-amino-acid chain: Large ribosomal subunit protein eL18 (188 aa).

Lys-119 participates in a covalent cross-link: Glycyl lysine isopeptide (Lys-Gly) (interchain with G-Cter in SUMO2). Position 130 is a phosphoserine (Ser-130). The segment at 150–188 is disordered; the sequence is RHFGKAPRTPHSHTKPYVRSKGRKFERARGRWASRGYKN. Basic residues-rich tracts occupy residues 151 to 171 and 179 to 188; these read HFGK…RSKG and GRWASRGYKN. Residue Thr-158 is modified to Phosphothreonine. Lys-164 participates in a covalent cross-link: Glycyl lysine isopeptide (Lys-Gly) (interchain with G-Cter in SUMO2).

The protein belongs to the eukaryotic ribosomal protein eL18 family. Component of the large ribosomal subunit.

Its subcellular location is the cytoplasm. It localises to the cytosol. The protein localises to the rough endoplasmic reticulum. Component of the large ribosomal subunit. The ribosome is a large ribonucleoprotein complex responsible for the synthesis of proteins in the cell. This is Large ribosomal subunit protein eL18 (RPL18) from Oryctolagus cuniculus (Rabbit).